Reading from the N-terminus, the 321-residue chain is Glucokinase (321 aa).

8 to 13 (GDVGGT) serves as a coordination point for ATP.

This sequence belongs to the bacterial glucokinase family.

The protein resides in the cytoplasm. It carries out the reaction D-glucose + ATP = D-glucose 6-phosphate + ADP + H(+). In Erwinia tasmaniensis (strain DSM 17950 / CFBP 7177 / CIP 109463 / NCPPB 4357 / Et1/99), this protein is Glucokinase.